A 3410-amino-acid chain; its full sequence is Genome polyprotein (3410 aa).

Residues 1 to 103 are Cytoplasmic-facing; that stretch reads MTKKPGRPGR…DFVHLPKKKS (103 aa). Residues 2–15 are interaction with host EXOC1; that stretch reads TKKPGRPGRNRAVN. Residues 38-73 form a hydrophobic; homodimerization of capsid protein C region; the sequence is LLDGRGPLRMVLAILAFFRFTALKPTAGLLKRWGMM. The propeptide at 103 to 119 is ER anchor for the capsid protein C, removed in mature form by serine protease NS3; it reads SGVSIIGRMLVFSFTAA. Residues 104 to 124 form a helical membrane-spanning segment; it reads GVSIIGRMLVFSFTAAVRVTL. Over 125-245 the chain is Extracellular; the sequence is ENGMSLMKIQ…ATSYLTKAES (121 aa). A helical membrane pass occupies residues 246–266; sequence WALRNPGYALVAAVLGWSLGT. Over 267 to 271 the chain is Cytoplasmic; it reads SNAQK. The helical transmembrane segment at 272–286 threads the bilayer; sequence VIFTVMILLIAPAYS. The Extracellular segment spans residues 287–739; it reads IRCVGVENRD…QIFGGMFRTL (453 aa). 6 cysteine pairs are disulfide-bonded: C289/C316, C346/C402, C346/C407, C360/C391, C378/C402, and C378/C407. Residues 384 to 397 form a fusion peptide region; that stretch reads DRGWGNGCGLFGKG. N440 carries an N-linked (GlcNAc...) asparagine; by host glycan. 2 cysteine pairs are disulfide-bonded: C476–C574 and C591–C622. The chain crosses the membrane as a helical span at residues 740-760; the sequence is FGGMSWFTQIMIGALCCWLGI. Topologically, residues 761 to 766 are cytoplasmic; it reads NARDRT. A helical membrane pass occupies residues 767 to 787; it reads IAVTFLAVGGVLVFLATSVNA. At 788 to 1165 the chain is on the extracellular side; the sequence is DSGCALDLKR…IALQEVMRKR (378 aa). 8 cysteine pairs are disulfide-bonded: C791/C802, C842/C928, C964/C1009, C1066/C1115, C1077/C1098, C1077/C1099, C1098/C1102, and C1099/C1102. Residue N915 is glycosylated (N-linked (GlcNAc...) asparagine; by host). The chain crosses the membrane as a helical span at residues 1166–1186; the sequence is ILGRHITWMVIAVFMAMILGG. Residues 1187-1214 are Cytoplasmic-facing; that stretch reads LSYRDLGRYLVLVGAAFAERNSGGDLLH. Residues 1215–1235 form a helical membrane-spanning segment; that stretch reads LVLVATFKVKPMALLGFVLGG. Over 1236–1242 the chain is Lumenal; it reads RWCRRQS. A helical membrane pass occupies residues 1243–1263; the sequence is LLLSIGAVLVNFALEFQGGYF. Over 1264 to 1284 the chain is Cytoplasmic; the sequence is ELVDSLALALLFVKAVVQTDT. Residues 1285–1305 traverse the membrane as a helical segment; sequence TSVSLPLLAALAPAGCYTVLG. The Lumenal portion of the chain corresponds to 1306–1335; sequence THRFIMLTLVLVTFLGCKKTASVKKAGTAA. The helical transmembrane segment at 1336-1356 threads the bilayer; that stretch reads VGVVLGMVGMKTIPMLGMLMV. Residues 1357-1363 lie on the Cytoplasmic side of the membrane; that stretch reads TSRARRS. The helical transmembrane segment at 1364–1384 threads the bilayer; the sequence is WPLHEAMAAVGILCALFGALA. Over 1385–1387 the chain is Lumenal; it reads ETE. The chain crosses the membrane as a helical span at residues 1388–1408; that stretch reads VDLAGPLAAAGLIVMAYVISG. Residues 1409–1464 lie on the Cytoplasmic side of the membrane; the sequence is RSNDLSIKKVEDVKWSDEAEVTGESVSYHVSLDVRGDPTLTEDSGPGLEKVLLKVG. Positions 1415–1454 are interacts with and activates NS3 protease; that stretch reads IKKVEDVKWSDEAEVTGESVSYHVSLDVRGDPTLTEDSGP. An intramembrane region (helical) is located at residues 1465 to 1485; that stretch reads LMAISGIYPVAIPFALGAWFF. The Cytoplasmic segment spans residues 1486 to 2158; that stretch reads LEKRCKRAGA…KAALENSPEM (673 aa). The Peptidase S7 domain maps to 1493-1670; sequence AGALWDIPSP…ENVGQEDGAE (178 aa). Catalysis depends on charge relay system; for serine protease NS3 activity residues H1543, D1567, and S1627. The 157-residue stretch at 1673 to 1829 folds into the Helicase ATP-binding domain; that stretch reads DNWFRKRELT…PSNSPIIDEE (157 aa). The tract at residues 1677–1680 is important for RNA-binding; that stretch reads RKRE. Residue 1686–1693 participates in ATP binding; sequence LHPGAGKT. The DEAH box motif lies at 1777 to 1780; it reads DEAH. The region spanning 1839–2006 is the Helicase C-terminal domain; it reads SGYEWIIEFD…QLYTPEREKT (168 aa). An N6-acetyllysine; by host modification is found at K1881. Residues 2153–2157 form a regulates the ATPase activity of NS3 helicase region; the sequence is ENSPE. The chain crosses the membrane as a helical span at residues 2159 to 2179; that stretch reads IETFLLCALVCLMTIGLVVVL. Over 2180 to 2185 the chain is Lumenal; it reads VRGKGP. The helical intramembrane region spans 2186–2205; the sequence is GKLAFGMVSIGVMTWLLWSA. A topological domain (lumenal) is located at residue G2206. Residues 2207-2227 form a helical membrane-spanning segment; that stretch reads VDPGKIAAAVILVFLLLVVLI. The Cytoplasmic portion of the chain corresponds to 2228-2242; sequence PEPEKQRSVQDNQLA. The chain crosses the membrane as a helical span at residues 2243-2257; the sequence is MLMLLIATILGGVAA. At 2258 to 2293 the chain is on the lumenal side; it reads NEMGWLEKTKADLSWVVRGRSSTTTPVVELDMKPAT. Residues 2294–2314 constitute an intramembrane region (helical); that stretch reads AWTLYALATTLLTPLFQHLIV. Residues 2315–2336 lie on the Lumenal side of the membrane; the sequence is TKYANISLMAIASQAGTLFSMD. A helical transmembrane segment spans residues 2337–2357; sequence SGIPFSSIELSVPLLALGCWT. A topological domain (cytoplasmic) is located at residue Q2358. The helical transmembrane segment at 2359–2379 threads the bilayer; the sequence is ITPCSLILACVLLSTHYAILL. Residues 2380-2420 are Lumenal-facing; the sequence is PGMQAQAARDAQRRTAAGIMKNAVVDGIVATDIPPLDGAGP. A helical membrane pass occupies residues 2421–2441; it reads LTEKKLGQLLLFAAAVTGVVI. Residues 2442-3410 lie on the Cytoplasmic side of the membrane; that stretch reads TRSPRSWSEL…EKRVEFRGVL (969 aa). The mRNA cap 0-1 NS5-type MT domain maps to 2508–2773; the sequence is GGGIGETLGE…DVNLSCGTRA (266 aa). S-adenosyl-L-methionine is bound at residue S2563. A Phosphoserine modification is found at S2563. The active-site For 2'-O-MTase activity is K2568. Residues G2593, W2594, T2611, K2612, D2638, and V2639 each contribute to the S-adenosyl-L-methionine site. The active-site For 2'-O-MTase activity is D2653. I2654 serves as a coordination point for S-adenosyl-L-methionine. Catalysis depends on for 2'-O-MTase activity residues K2690 and E2726. Y2728 provides a ligand contact to S-adenosyl-L-methionine. E2947, H2951, C2956, and C2959 together coordinate Zn(2+). Residues 3036–3187 enclose the RdRp catalytic domain; sequence GILYADDTAG…AAPDARFGAA (152 aa). Zn(2+) contacts are provided by H3222, C3238, and C3356.

In the N-terminal section; belongs to the class I-like SAM-binding methyltransferase superfamily. mRNA cap 0-1 NS5-type methyltransferase family. Homodimer. Interacts (via N-terminus) with host EXOC1 (via C-terminus); this interaction results in EXOC1 degradation through the proteasome degradation pathway. As to quaternary structure, forms heterodimers with envelope protein E in the endoplasmic reticulum and Golgi. In terms of assembly, homodimer; in the endoplasmic reticulum and Golgi. Interacts with protein prM. Interacts with non-structural protein 1. Homodimer; Homohexamer when secreted. Interacts with envelope protein E. NS1 interacts with NS4B. Interacts with host complement protein CFH; this interaction leads to the degradation of C3. As to quaternary structure, interacts (via N-terminus) with serine protease NS3. In terms of assembly, forms a heterodimer with serine protease NS3. May form homooligomers. Forms a heterodimer with NS2B. Interacts with non-structural protein 2A (via N-terminus). Interacts with NS4B. Interacts with unphosphorylated RNA-directed RNA polymerase NS5; this interaction stimulates RNA-directed RNA polymerase NS5 guanylyltransferase activity. As to quaternary structure, interacts with serine protease NS3. In terms of assembly, homodimer. Interacts with host STAT2; this interaction inhibits the phosphorylation of the latter, and, when all viral proteins are present (polyprotein), targets STAT2 for degradation. Post-translationally, specific enzymatic cleavages in vivo yield mature proteins. Cleavages in the lumen of endoplasmic reticulum are performed by host signal peptidase, whereas cleavages in the cytoplasmic side are performed by serine protease NS3. Signal cleavage at the 2K-4B site requires a prior NS3 protease-mediated cleavage at the 4A-2K site. Cleaved in post-Golgi vesicles by a host furin, releasing the mature small envelope protein M, and peptide pr. This cleavage is incomplete as up to 30% of viral particles still carry uncleaved prM. In terms of processing, N-glycosylated. Post-translationally, N-glycosylated. The excreted form is glycosylated and this is required for efficient secretion of the protein from infected cells. Acetylated by host KAT5. Acetylation modulates NS3 RNA-binding and unwinding activities and plays an important positive role for viral replication. In terms of processing, phosphorylated on serines residues. This phosphorylation may trigger NS5 nuclear localization.

It is found in the virion. Its subcellular location is the host nucleus. The protein resides in the host cytoplasm. The protein localises to the host perinuclear region. It localises to the secreted. It is found in the virion membrane. Its subcellular location is the host endoplasmic reticulum membrane. It catalyses the reaction Selective hydrolysis of -Xaa-Xaa-|-Yaa- bonds in which each of the Xaa can be either Arg or Lys and Yaa can be either Ser or Ala.. It carries out the reaction RNA(n) + a ribonucleoside 5'-triphosphate = RNA(n+1) + diphosphate. The catalysed reaction is a ribonucleoside 5'-triphosphate + H2O = a ribonucleoside 5'-diphosphate + phosphate + H(+). The enzyme catalyses ATP + H2O = ADP + phosphate + H(+). It catalyses the reaction a 5'-end (5'-triphosphoguanosine)-ribonucleoside in mRNA + S-adenosyl-L-methionine = a 5'-end (N(7)-methyl 5'-triphosphoguanosine)-ribonucleoside in mRNA + S-adenosyl-L-homocysteine. It carries out the reaction a 5'-end (N(7)-methyl 5'-triphosphoguanosine)-ribonucleoside in mRNA + S-adenosyl-L-methionine = a 5'-end (N(7)-methyl 5'-triphosphoguanosine)-(2'-O-methyl-ribonucleoside) in mRNA + S-adenosyl-L-homocysteine + H(+). In terms of biological role, plays a role in virus budding by binding to the cell membrane and gathering the viral RNA into a nucleocapsid that forms the core of a mature virus particle. During virus entry, may induce genome penetration into the host cytoplasm after hemifusion induced by the surface proteins. Can migrate to the cell nucleus where it modulates host functions. Overcomes the anti-viral effects of host EXOC1 by sequestering and degrading the latter through the proteasome degradation pathway. Inhibits RNA silencing by interfering with host Dicer. Its function is as follows. Prevents premature fusion activity of envelope proteins in trans-Golgi by binding to envelope protein E at pH6.0. After virion release in extracellular space, gets dissociated from E dimers. Functionally, acts as a chaperone for envelope protein E during intracellular virion assembly by masking and inactivating envelope protein E fusion peptide. prM is the only viral peptide matured by host furin in the trans-Golgi network probably to avoid catastrophic activation of the viral fusion activity in acidic Golgi compartment prior to virion release. prM-E cleavage is inefficient, and many virions are only partially matured. These uncleaved prM would play a role in immune evasion. In terms of biological role, may play a role in virus budding. Exerts cytotoxic effects by activating a mitochondrial apoptotic pathway through M ectodomain. May display a viroporin activity. Binds to host cell surface receptor and mediates fusion between viral and cellular membranes. Envelope protein is synthesized in the endoplasmic reticulum in the form of heterodimer with protein prM. They play a role in virion budding in the ER, and the newly formed immature particle is covered with 60 spikes composed of heterodimer between precursor prM and envelope protein E. The virion is transported to the Golgi apparatus where the low pH causes dissociation of PrM-E heterodimers and formation of E homodimers. prM-E cleavage is inefficient, and many virions are only partially matured. These uncleaved prM would play a role in immune evasion. Its function is as follows. Involved in immune evasion, pathogenesis and viral replication. Once cleaved off the polyprotein, is targeted to three destinations: the viral replication cycle, the plasma membrane and the extracellular compartment. Essential for viral replication. Required for formation of the replication complex and recruitment of other non-structural proteins to the ER-derived membrane structures. Excreted as a hexameric lipoparticle that plays a role against host immune response. Antagonizing the complement function. Binds to the host macrophages and dendritic cells. Inhibits signal transduction originating from Toll-like receptor 3 (TLR3). Functionally, component of the viral RNA replication complex that functions in virion assembly and antagonizes the host alpha/beta interferon antiviral response. In terms of biological role, required cofactor for the serine protease function of NS3. May have membrane-destabilizing activity and form viroporins. Displays three enzymatic activities: serine protease, NTPase and RNA helicase. NS3 serine protease, in association with NS2B, performs its autocleavage and cleaves the polyprotein at dibasic sites in the cytoplasm: C-prM, NS2A-NS2B, NS2B-NS3, NS3-NS4A, NS4A-2K and NS4B-NS5. NS3 RNA helicase binds RNA and unwinds dsRNA in the 3' to 5' direction. Its function is as follows. Regulates the ATPase activity of the NS3 helicase activity. NS4A allows NS3 helicase to conserve energy during unwinding. Functionally, functions as a signal peptide for NS4B and is required for the interferon antagonism activity of the latter. In terms of biological role, induces the formation of ER-derived membrane vesicles where the viral replication takes place. Inhibits interferon (IFN)-induced host STAT1 phosphorylation and nuclear translocation, thereby preventing the establishment of cellular antiviral state by blocking the IFN-alpha/beta pathway. Inhibits STAT2 translocation in the nucleus after IFN-alpha treatment. Replicates the viral (+) and (-) RNA genome, and performs the capping of genomes in the cytoplasm. NS5 methylates viral RNA cap at guanine N-7 and ribose 2'-O positions. Besides its role in RNA genome replication, also prevents the establishment of cellular antiviral state by blocking the interferon-alpha/beta (IFN-alpha/beta) signaling pathway. Inhibits host TYK2 and STAT2 phosphorylation, thereby preventing activation of JAK-STAT signaling pathway. This chain is Genome polyprotein, found in Kokobera virus (KOKV).